Reading from the N-terminus, the 154-residue chain is Myoglobin (154 aa).

Residues 2–148 (GLSDGEWQLV…FRNDMAAKYK (147 aa)) form the Globin domain. Ser-4 bears the Phosphoserine mark. A nitrite-binding site is contributed by His-65. Position 65 (His-65) interacts with O2. Thr-68 bears the Phosphothreonine mark. His-94 contacts heme b.

This sequence belongs to the globin family. Monomeric.

It localises to the cytoplasm. It is found in the sarcoplasm. The catalysed reaction is Fe(III)-heme b-[protein] + nitric oxide + H2O = Fe(II)-heme b-[protein] + nitrite + 2 H(+). The enzyme catalyses H2O2 + AH2 = A + 2 H2O. Functionally, monomeric heme protein which primary function is to store oxygen and facilitate its diffusion within muscle tissues. Reversibly binds oxygen through a pentacoordinated heme iron and enables its timely and efficient release as needed during periods of heightened demand. Depending on the oxidative conditions of tissues and cells, and in addition to its ability to bind oxygen, it also has a nitrite reductase activity whereby it regulates the production of bioactive nitric oxide. Under stress conditions, like hypoxia and anoxia, it also protects cells against reactive oxygen species thanks to its pseudoperoxidase activity. This is Myoglobin (MB) from Didelphis virginiana (North American opossum).